The following is a 658-amino-acid chain: Glycogen debranching enzyme (658 aa).

Asp-336 acts as the Nucleophile in catalysis. Glu-371 functions as the Proton donor in the catalytic mechanism. The disordered stretch occupies residues 459 to 484 (EANGEENRDGTNSNYSDNHGKEGLGG).

This sequence belongs to the glycosyl hydrolase 13 family.

It carries out the reaction Hydrolysis of (1-&gt;6)-alpha-D-glucosidic linkages to branches with degrees of polymerization of three or four glucose residues in limit dextrin.. It functions in the pathway glycan degradation; glycogen degradation. Its function is as follows. Removes maltotriose and maltotetraose chains that are attached by 1,6-alpha-linkage to the limit dextrin main chain, generating a debranched limit dextrin. The sequence is that of Glycogen debranching enzyme from Salmonella choleraesuis (strain SC-B67).